Reading from the N-terminus, the 318-residue chain is NADH-ubiquinone oxidoreductase chain 1 (318 aa).

The next 8 helical transmembrane spans lie at 2–22 (FMIN…FLTL), 70–90 (MFIL…IPLP), 100–120 (LGVL…LWSG), 147–167 (AIIL…TLII), 172–192 (TWLI…TLAE), 222–242 (LFFM…AILF), 253–273 (ELYT…FLWI), and 294–314 (LPLT…TSGI).

It belongs to the complex I subunit 1 family. Core subunit of respiratory chain NADH dehydrogenase (Complex I) which is composed of 45 different subunits.

It localises to the mitochondrion inner membrane. The catalysed reaction is a ubiquinone + NADH + 5 H(+)(in) = a ubiquinol + NAD(+) + 4 H(+)(out). Its function is as follows. Core subunit of the mitochondrial membrane respiratory chain NADH dehydrogenase (Complex I) which catalyzes electron transfer from NADH through the respiratory chain, using ubiquinone as an electron acceptor. Essential for the catalytic activity and assembly of complex I. The sequence is that of NADH-ubiquinone oxidoreductase chain 1 (MT-ND1) from Bos mutus grunniens (Wild yak).